The following is a 624-amino-acid chain: UvrABC system protein C (624 aa).

The GIY-YIG domain occupies 27–105 (LSPGVYRMLS…IKSLGPRYNI (79 aa)). Positions 215–250 (RRVQHDLTARMESAAEAMEYEAAAVFRDRIRALTRI) constitute a UVR domain.

This sequence belongs to the UvrC family. Interacts with UvrB in an incision complex.

The protein localises to the cytoplasm. Its function is as follows. The UvrABC repair system catalyzes the recognition and processing of DNA lesions. UvrC both incises the 5' and 3' sides of the lesion. The N-terminal half is responsible for the 3' incision and the C-terminal half is responsible for the 5' incision. This chain is UvrABC system protein C, found in Paramagnetospirillum magneticum (strain ATCC 700264 / AMB-1) (Magnetospirillum magneticum).